The chain runs to 727 residues: Probable acyl-activating enzyme 18, peroxisomal (727 aa).

The Microbody targeting signal signature appears at 725 to 727 (SRI).

It belongs to the ATP-dependent AMP-binding enzyme family. In terms of tissue distribution, expressed in flowers.

It is found in the peroxisome. Its function is as follows. May be involved in the peroxisomal activation of 2,4-dichlorophenoxybutyric acid (2,4-DB), a precursor of active auxins that inhibit root growth. The sequence is that of Probable acyl-activating enzyme 18, peroxisomal (AAE18) from Arabidopsis thaliana (Mouse-ear cress).